Reading from the N-terminus, the 512-residue chain is PTS system mannitol-specific EIICB component (512 aa).

The Cytoplasmic segment spans residues 1–28 (MSQTEEKKGIGRRVQAFGSFLSSMIMPN). One can recognise a PTS EIIC type-2 domain in the interval 17-349 (FGSFLSSMIM…MKFTREPKQD (333 aa)). The chain crosses the membrane as a helical span at residues 29–50 (IGAFIAWGFIAAIFIDNGWLPN). At 51-54 (KDLA) the chain is on the extracellular side. The helical transmembrane segment at 55-75 (TLAGPMITYLIPLLIAFSGGR) threads the bilayer. The Cytoplasmic segment spans residues 76 to 139 (LIYDLRGGII…QGFEMLFNNF (64 aa)). A helical transmembrane segment spans residues 140-161 (SAGILGFIMTIAGFKILAPLMK). The Extracellular segment spans residues 162–170 (FIMHILSVA). A helical membrane pass occupies residues 171-191 (VEALVHAHLLPLVSILVEPAK). Over 192 to 278 (IVFLNNAINH…VLMRPLLFIA (87 aa)) the chain is Cytoplasmic. A helical transmembrane segment spans residues 279–298 (VILGGMTGVATYQATGFGFK). The Extracellular portion of the chain corresponds to 299 to 318 (SPASPGSFIVYCLNAPRGEF). A helical transmembrane segment spans residues 319-340 (LHMLLGVFLAALVSFVVAALIM). The Cytoplasmic portion of the chain corresponds to 341-512 (KFTREPKQDL…LNNLKKDDQA (172 aa)). The tract at residues 355 to 402 (AQMENTKGKKSSVASKLVSSDKNVNTEENASGNVSETSSSDDDPEALL) is disordered. Low complexity predominate over residues 365 to 376 (SSVASKLVSSDK). A compositionally biased stretch (polar residues) spans 380–392 (TEENASGNVSETS). In terms of domain architecture, PTS EIIB type-2 spans 419–512 (NHVIFACDAG…LNNLKKDDQA (94 aa)). Residue Cys425 is the Phosphocysteine intermediate; for EIIB activity of the active site. Cys425 is subject to Phosphocysteine; by EIIA.

In terms of assembly, homodimer.

The protein resides in the cell membrane. It carries out the reaction D-mannitol(out) + N(pros)-phospho-L-histidyl-[protein] = D-mannitol 1-phosphate(in) + L-histidyl-[protein]. Functionally, the phosphoenolpyruvate-dependent sugar phosphotransferase system (sugar PTS), a major carbohydrate active transport system, catalyzes the phosphorylation of incoming sugar substrates concomitantly with their translocation across the cell membrane. The enzyme II CmtAB PTS system is involved in D-mannitol transport. In Staphylococcus aureus (strain COL), this protein is PTS system mannitol-specific EIICB component (mtlA).